The sequence spans 394 residues: Elongation factor Tu (394 aa).

The tr-type G domain maps to 10 to 204 (KPHVNVGTIG…ALDSYIPEPQ (195 aa)). Positions 19–26 (GHVDHGKT) are G1. 19–26 (GHVDHGKT) lines the GTP pocket. T26 contacts Mg(2+). The interval 60–64 (GITIN) is G2. The tract at residues 81 to 84 (DCPG) is G3. Residues 81–85 (DCPGH) and 136–139 (NKCD) each bind GTP. Residues 136–139 (NKCD) form a G4 region. The tract at residues 174 to 176 (SAL) is G5.

It belongs to the TRAFAC class translation factor GTPase superfamily. Classic translation factor GTPase family. EF-Tu/EF-1A subfamily. As to quaternary structure, monomer.

The protein localises to the cytoplasm. The enzyme catalyses GTP + H2O = GDP + phosphate + H(+). Its function is as follows. GTP hydrolase that promotes the GTP-dependent binding of aminoacyl-tRNA to the A-site of ribosomes during protein biosynthesis. This is Elongation factor Tu from Shewanella baltica (strain OS185).